A 564-amino-acid polypeptide reads, in one-letter code: Protein NRT1/ PTR FAMILY 5.16 (564 aa).

Helical transmembrane passes span 49-69 (FAYF…LGQS) and 80-100 (WSGT…AYLG). Thr-104 carries the post-translational modification Phosphothreonine. The next 10 membrane-spanning stretches (helical) occupy residues 110–130 (LIYI…LMGL), 145–165 (FFWV…GQGG), 192–212 (FFNW…IVVV), 220–240 (WALG…LFLF), 327–347 (IPIW…ATFF), 358–378 (ILPG…LSIF), 408–428 (IGAG…VEMK), 450–470 (IWWF…SLVG), 486–506 (IGLA…GFLI), and 533–553 (YFYW…LLLS).

This sequence belongs to the major facilitator superfamily. Proton-dependent oligopeptide transporter (POT/PTR) (TC 2.A.17) family. In terms of tissue distribution, expressed in shoots and roots.

It is found in the membrane. The sequence is that of Protein NRT1/ PTR FAMILY 5.16 (NPF5.16) from Arabidopsis thaliana (Mouse-ear cress).